The chain runs to 451 residues: 3-phosphoshikimate 1-carboxyvinyltransferase (451 aa).

3-phosphoshikimate is bound by residues lysine 30, serine 31, and arginine 35. Residue lysine 30 coordinates phosphoenolpyruvate. Phosphoenolpyruvate is bound by residues glycine 101 and arginine 130. 3-phosphoshikimate contacts are provided by serine 176, serine 177, glutamine 178, aspartate 321, and lysine 348. Glutamine 178 is a binding site for phosphoenolpyruvate. Aspartate 321 functions as the Proton acceptor in the catalytic mechanism. Phosphoenolpyruvate contacts are provided by arginine 352 and glutamine 422.

It belongs to the EPSP synthase family. In terms of assembly, monomer.

It is found in the cytoplasm. The catalysed reaction is 3-phosphoshikimate + phosphoenolpyruvate = 5-O-(1-carboxyvinyl)-3-phosphoshikimate + phosphate. Its pathway is metabolic intermediate biosynthesis; chorismate biosynthesis; chorismate from D-erythrose 4-phosphate and phosphoenolpyruvate: step 6/7. Its function is as follows. Catalyzes the transfer of the enolpyruvyl moiety of phosphoenolpyruvate (PEP) to the 5-hydroxyl of shikimate-3-phosphate (S3P) to produce enolpyruvyl shikimate-3-phosphate and inorganic phosphate. The sequence is that of 3-phosphoshikimate 1-carboxyvinyltransferase from Burkholderia pseudomallei (strain K96243).